Consider the following 157-residue polypeptide: 2-C-methyl-D-erythritol 2,4-cyclodiphosphate synthase (157 aa).

Positions 8 and 10 each coordinate a divalent metal cation. Residues Asp8–His10 and His34–Ser35 contribute to the 4-CDP-2-C-methyl-D-erythritol 2-phosphate site. Residue His42 participates in a divalent metal cation binding. 4-CDP-2-C-methyl-D-erythritol 2-phosphate contacts are provided by residues Asp56–Gly58, Thr132–Glu135, and Arg142.

Belongs to the IspF family. In terms of assembly, homotrimer. The cofactor is a divalent metal cation.

It carries out the reaction 4-CDP-2-C-methyl-D-erythritol 2-phosphate = 2-C-methyl-D-erythritol 2,4-cyclic diphosphate + CMP. It participates in isoprenoid biosynthesis; isopentenyl diphosphate biosynthesis via DXP pathway; isopentenyl diphosphate from 1-deoxy-D-xylulose 5-phosphate: step 4/6. Its function is as follows. Involved in the biosynthesis of isopentenyl diphosphate (IPP) and dimethylallyl diphosphate (DMAPP), two major building blocks of isoprenoid compounds. Catalyzes the conversion of 4-diphosphocytidyl-2-C-methyl-D-erythritol 2-phosphate (CDP-ME2P) to 2-C-methyl-D-erythritol 2,4-cyclodiphosphate (ME-CPP) with a corresponding release of cytidine 5-monophosphate (CMP). This is 2-C-methyl-D-erythritol 2,4-cyclodiphosphate synthase from Chlorobaculum parvum (strain DSM 263 / NCIMB 8327) (Chlorobium vibrioforme subsp. thiosulfatophilum).